The sequence spans 365 residues: MKRQLILEDGTVLIGTGFGGEIEKSGEVVFTTGMTGYQETLSDPSYCGQIVTFTYPLIGNYGINRDDFESIHPSVNGLIVNEICDHPSNFRNEISLNDYLKERKIPGLAGIDTRKLTRKIRQYGTLRGRLCNMDADVEYIVSQLKATVFTDHVKRVSTKDPYPSPGRGHRVVLVDFGMKHGILRELNKRDCDVIVVPYNTTAEEILRLSPDGIMLSNGPGDPKDVPEAIEMLKDIIGKVPLFGICLGHQLFALASGANTSKLKFGHRGLNHPVKNIATGKVAITSQNHGYAVEEESVENTELEITHVALNDGTVEGLRHKKFPAFTVQYHPEASAGPEDANDLFEDFLTMIENFKKEGEELCQNA.

2 CPSase regions span residues M1–G166 and M1–H169. L-glutamine-binding residues include S45, G218, and G220. Positions R170–E357 constitute a Glutamine amidotransferase type-1 domain. The Nucleophile role is filled by C245. Residues L246, Q249, N287, G289, and Y290 each coordinate L-glutamine. Residues H330 and E332 contribute to the active site.

It belongs to the CarA family. In terms of assembly, composed of two chains; the small (or glutamine) chain promotes the hydrolysis of glutamine to ammonia, which is used by the large (or ammonia) chain to synthesize carbamoyl phosphate. Tetramer of heterodimers (alpha,beta)4.

It catalyses the reaction hydrogencarbonate + L-glutamine + 2 ATP + H2O = carbamoyl phosphate + L-glutamate + 2 ADP + phosphate + 2 H(+). The catalysed reaction is L-glutamine + H2O = L-glutamate + NH4(+). Its pathway is amino-acid biosynthesis; L-arginine biosynthesis; carbamoyl phosphate from bicarbonate: step 1/1. It functions in the pathway pyrimidine metabolism; UMP biosynthesis via de novo pathway; (S)-dihydroorotate from bicarbonate: step 1/3. Its function is as follows. Small subunit of the glutamine-dependent carbamoyl phosphate synthetase (CPSase). CPSase catalyzes the formation of carbamoyl phosphate from the ammonia moiety of glutamine, carbonate, and phosphate donated by ATP, constituting the first step of 2 biosynthetic pathways, one leading to arginine and/or urea and the other to pyrimidine nucleotides. The small subunit (glutamine amidotransferase) binds and cleaves glutamine to supply the large subunit with the substrate ammonia. This Bacillus cereus (strain ZK / E33L) protein is Carbamoyl phosphate synthase small chain.